Reading from the N-terminus, the 473-residue chain is Photosystem II CP43 reaction center protein (473 aa).

Residues 1–14 (MKTLYSLRRFYHVE) constitute a propeptide that is removed on maturation. Thr-15 carries the N-acetylthreonine modification. At Thr-15 the chain carries Phosphothreonine. 5 helical membrane passes run 69–93 (LFEVAHYIPEKPLYEQGLILLPHLA), 134–155 (LIGPDTLEESFPAFGYDWRDKN), 178–200 (KAIYVGGLYDTWAPGGGDVRIID), 255–275 (KPFAWARRAYVWSGEAYLSYS), and 291–312 (WYNNTVYPSEFYGPTGPEASQS). Glu-367 serves as a coordination point for [CaMn4O5] cluster. Residues 447–471 (RARAAAAGFEKGINRENEPVLTLRP) traverse the membrane as a helical segment.

It belongs to the PsbB/PsbC family. PsbC subfamily. As to quaternary structure, PSII is composed of 1 copy each of membrane proteins PsbA, PsbB, PsbC, PsbD, PsbE, PsbF, PsbH, PsbI, PsbJ, PsbK, PsbL, PsbM, PsbT, PsbX, PsbY, PsbZ, Psb30/Ycf12, at least 3 peripheral proteins of the oxygen-evolving complex and a large number of cofactors. It forms dimeric complexes. Binds multiple chlorophylls and provides some of the ligands for the Ca-4Mn-5O cluster of the oxygen-evolving complex. It may also provide a ligand for a Cl- that is required for oxygen evolution. PSII binds additional chlorophylls, carotenoids and specific lipids. is required as a cofactor.

The protein resides in the plastid. It localises to the chloroplast thylakoid membrane. Functionally, one of the components of the core complex of photosystem II (PSII). It binds chlorophyll and helps catalyze the primary light-induced photochemical processes of PSII. PSII is a light-driven water:plastoquinone oxidoreductase, using light energy to abstract electrons from H(2)O, generating O(2) and a proton gradient subsequently used for ATP formation. This Guillardia theta (Cryptophyte) protein is Photosystem II CP43 reaction center protein.